The sequence spans 339 residues: Transcription factor IIIA (339 aa).

9 consecutive C2H2-type zinc fingers follow at residues 12–36 (FICS…LCKH), 42–66 (FPCT…VLSH), 72–97 (CKCE…KRAH), 104–128 (YVCY…QYIH), 134–158 (FKCS…EKTH), 161–187 (YPCR…AELH), 190–212 (VTCS…KKIH), 219–244 (YRCP…LTFH), and 250–274 (FVCE…FNTH). The segment at 271 to 339 (FNTHDPEKKK…LPVLENLTLK (69 aa)) is disordered. The segment covering 299–309 (KPKKSKKKKKP) has biased composition (basic residues). Polar residues predominate over residues 311 to 323 (QTPAMESQEQQPD).

It localises to the nucleus. Involved in ribosomal large subunit biogenesis. Interacts with the internal control region (ICR) of approximately 50 bases within the 5S RNA genes, is required for correct transcription of these genes by RNA polymerase III. Also binds the transcribed 5S RNA's. This is Transcription factor IIIA (gtf3a) from Anaxyrus americanus (American toad).